The sequence spans 295 residues: Ribosomal protein L11 methyltransferase (295 aa).

Threonine 150, glycine 171, aspartate 193, and asparagine 232 together coordinate S-adenosyl-L-methionine.

This sequence belongs to the methyltransferase superfamily. PrmA family.

Its subcellular location is the cytoplasm. The enzyme catalyses L-lysyl-[protein] + 3 S-adenosyl-L-methionine = N(6),N(6),N(6)-trimethyl-L-lysyl-[protein] + 3 S-adenosyl-L-homocysteine + 3 H(+). Methylates ribosomal protein L11. In Neisseria gonorrhoeae (strain ATCC 700825 / FA 1090), this protein is Ribosomal protein L11 methyltransferase.